The sequence spans 132 residues: Interleukin-5 (132 aa).

The first 19 residues, 1–19 (MHLRLTLVALGAAYVCANA), serve as a signal peptide directing secretion. 2 N-linked (GlcNAc...) asparagine glycosylation sites follow: N74 and N88.

Belongs to the IL-5 family. In terms of assembly, homodimer; disulfide-linked. Interacts with IL5RA. Interacts with CSF2RB.

The protein localises to the secreted. Its function is as follows. Homodimeric cytokine expressed predominantly by T-lymphocytes and NK cells that plays an important role in the survival, differentiation, and chemotaxis of eosinophils. Also acts on activated and resting B-cells to induce immunoglobulin production, growth, and differentiation. Mechanistically, exerts its biological effects through a receptor composed of IL5RA subunit and the cytokine receptor common subunit beta/CSF2RB. Binding to the receptor leads to activation of various kinases including LYN, SYK and JAK2 and thereby propagates signals through the RAS-MAPK and JAK-STAT5 pathways respectively. The protein is Interleukin-5 (IL5) of Ovis aries (Sheep).